The sequence spans 480 residues: 2-phosphoxylose phosphatase 1 (480 aa).

At 1–6 (MLFRNR) the chain is on the cytoplasmic side. Residues 7–27 (FLLLLALAALLAFVSLSLQFF) traverse the membrane as a helical; Signal-anchor for type II membrane protein segment. The Lumenal segment spans residues 28–480 (HLIPVSTPKN…YYDACHREGF (453 aa)). The active-site Nucleophile is His-97. N-linked (GlcNAc...) asparagine glycosylation is found at Asn-305 and Asn-354. The active-site Proton donor is Asp-379.

This sequence belongs to the histidine acid phosphatase family. In terms of assembly, interacts with B3GAT3; the interaction increases the 2-phosphoxylose phosphatase activity of PXYLP1 during completion of linkage region formation in a B3GAT3-mediated manner. In terms of tissue distribution, widely expressed. Strongly expressed in spleen, fetal liver, moderately in placenta, pancreas, kidney, thymus and colon.

The protein resides in the golgi apparatus membrane. The catalysed reaction is 3-O-[beta-D-GlcA-(1-&gt;3)-beta-D-Gal-(1-&gt;3)-beta-D-Gal-(1-&gt;4)-beta-D-2-O-P-Xyl]-L-seryl-[protein] + H2O = 3-O-(beta-D-GlcA-(1-&gt;3)-beta-D-Gal-(1-&gt;3)-beta-D-Gal-(1-&gt;4)-beta-D-Xyl)-L-seryl-[protein] + phosphate. Functionally, responsible for the 2-O-dephosphorylation of xylose in the glycosaminoglycan-protein linkage region of proteoglycans thereby regulating the amount of mature glycosaminoglycan (GAG) chains. Sulfated glycosaminoglycans (GAGs), including heparan sulfate and chondroitin sulfate, are synthesized on the so-called common GAG-protein linkage region (GlcUAbeta1-3Galbeta1-3Galbeta1-4Xylbeta1-O-Ser) of core proteins, which is formed by the stepwise addition of monosaccharide residues by the respective specific glycosyltransferases. Xylose 2-O-dephosphorylation during completion of linkage region formation is a prerequisite for the initiation and efficient elongation of the repeating disaccharide region of GAG chains. In Homo sapiens (Human), this protein is 2-phosphoxylose phosphatase 1.